We begin with the raw amino-acid sequence, 523 residues long: Inosine-5'-monophosphate dehydrogenase 2 (523 aa).

2 CBS domains span residues 121–183 (FINN…VQDV) and 184–240 (MTKN…PLAS). Residues 278–280 (DSS) and 328–330 (GMG) contribute to the NAD(+) site. Positions 330 and 332 each coordinate K(+). Serine 333 is an IMP binding site. Cysteine 335 is a K(+) binding site. The Thioimidate intermediate role is filled by cysteine 335. Residues 368–370 (DGG), 391–392 (GG), and 415–419 (YRGMG) each bind IMP. Arginine 437 functions as the Proton acceptor in the catalytic mechanism. Glutamine 449 lines the IMP pocket. Glutamate 508, glycine 509, and glycine 510 together coordinate K(+).

The protein belongs to the IMPDH/GMPR family. In terms of assembly, homotetramer. Seems to be able to form heterotetramers composed from more than 1 of the 3 IMPDH gene products (IMD2-4). The cofactor is K(+).

The protein localises to the cytoplasm. It catalyses the reaction IMP + NAD(+) + H2O = XMP + NADH + H(+). It participates in purine metabolism; XMP biosynthesis via de novo pathway; XMP from IMP: step 1/1. Its activity is regulated as follows. Mycophenolic acid (MPA) is a non-competitive inhibitor that prevents formation of the closed enzyme conformation by binding to the same site as the amobile flap. In contrast, mizoribine monophosphate (MZP) is a competitive inhibitor that induces the closed conformation. MPA is a potent inhibitor of mammalian IMPDHs but a poor inhibitor of the bacterial enzymes. MZP is a more potent inhibitor of bacterial IMPDH. Catalyzes the conversion of inosine 5'-phosphate (IMP) to xanthosine 5'-phosphate (XMP), the first committed and rate-limiting step in the de novo synthesis of guanine nucleotides, and therefore plays an important role in the regulation of cell growth. In contrast to the other IMPDH alleles IMD3 and IMD4, the enzymatic activity of IMD2 seems to be intrinsically drug resistant. The sequence is that of Inosine-5'-monophosphate dehydrogenase 2 from Saccharomyces cerevisiae (strain ATCC 204508 / S288c) (Baker's yeast).